The chain runs to 566 residues: Urease subunit alpha (566 aa).

In terms of domain architecture, Urease spans 128 to 566 (GGIDTHIHWI…LPMAQRYFLF (439 aa)). Residues His-133, His-135, and Lys-216 each coordinate Ni(2+). Position 216 is an N6-carboxylysine (Lys-216). His-218 is a binding site for substrate. Ni(2+)-binding residues include His-245 and His-271. His-319 acts as the Proton donor in catalysis. Residue Asp-359 participates in Ni(2+) binding.

This sequence belongs to the metallo-dependent hydrolases superfamily. Urease alpha subunit family. As to quaternary structure, heterotrimer of UreA (gamma), UreB (beta) and UreC (alpha) subunits. Three heterotrimers associate to form the active enzyme. The cofactor is Ni cation. Post-translationally, carboxylation allows a single lysine to coordinate two nickel ions.

The protein localises to the cytoplasm. It carries out the reaction urea + 2 H2O + H(+) = hydrogencarbonate + 2 NH4(+). It participates in nitrogen metabolism; urea degradation; CO(2) and NH(3) from urea (urease route): step 1/1. The sequence is that of Urease subunit alpha from Acinetobacter baylyi (strain ATCC 33305 / BD413 / ADP1).